We begin with the raw amino-acid sequence, 155 residues long: Fibroblast growth factor 1 (155 aa).

At alanine 2 the chain carries N-acetylalanine. Positions 2 to 15 (AEGEITTFSALTER) are excised as a propeptide. Residue asparagine 33 coordinates heparin. The tract at residues 127 to 143 (KKNGSCKRGPRTHYGQK) is heparin-binding.

It belongs to the heparin-binding growth factors family. Monomer. Homodimer. Interacts with FGFR1, FGFR2, FGFR3 and FGFR4. Affinity between fibroblast growth factors (FGFs) and their receptors is increased by heparan sulfate glycosaminoglycans that function as coreceptors. Found in a complex with FGFBP1, FGF1 and FGF2. Interacts with FGFBP1. Part of a Cu(2+)-dependent multiprotein aggregate containing FGF1, S100A13 and SYT1. Interacts with SYT1. Interacts with S100A13. Interacts with LRRC59. Interacts with CSNKA, CSNKB and FIBP. While binding with LRRC59, CSNKA and FIBP seem mutually exclusive, CSNKB and FIBP may cooperatively interact with FGF1. Forms a ternary complex with FGFR1 and ITGAV:ITGB3 and induces the recruitment of PTPN11 to the complex. In the nucleus, phosphorylated by PKC/PRKCD.

Its subcellular location is the secreted. The protein localises to the cytoplasm. It localises to the cell cortex. The protein resides in the cytosol. It is found in the nucleus. Its function is as follows. Plays an important role in the regulation of cell survival, cell division, angiogenesis, cell differentiation and cell migration. Functions as a potent mitogen in vitro. Acts as a ligand for FGFR1 and integrins. Binds to FGFR1 in the presence of heparin leading to FGFR1 dimerization and activation via sequential autophosphorylation on tyrosine residues which act as docking sites for interacting proteins, leading to the activation of several signaling cascades. Binds to integrin ITGAV:ITGB3. Its binding to integrin, subsequent ternary complex formation with integrin and FGFR1, and the recruitment of PTPN11 to the complex are essential for FGF1 signaling. Induces the phosphorylation and activation of FGFR1, FRS2, MAPK3/ERK1, MAPK1/ERK2 and AKT1. Can induce angiogenesis. The protein is Fibroblast growth factor 1 (FGF1) of Mesocricetus auratus (Golden hamster).